The chain runs to 104 residues: Circadian clock oscillator protein KaiB (104 aa).

The protein belongs to the KaiB family. The KaiABC complex composition changes during the circadian cycle to control KaiC phosphorylation. Complexes KaiC(6), KaiA(2-4):KaiC(6), KaiB(6):KaiC(6) and KaiC(6):KaiB(6):KaiA(12) are among the most important forms, many form cooperatively. Undergoes a major conformational rearrangment; in the free state forms homotetramers as a dimer of dimers. When bound to the CI domain of KaiC switches to a monomeric thioredoxin-fold (KaiB(fs)). KaiB(fs) binds CikA, leading it to dephosphorylate phospho-RpaA.

In terms of biological role, key component of the KaiABC oscillator complex, which constitutes the main circadian regulator in cyanobacteria. Complex composition changes during the circadian cycle to control KaiC phosphorylation. KaiA stimulates KaiC autophosphorylation, while KaiB sequesters KaiA, leading to KaiC autodephosphorylation. Phospho-Ser-431 KaiC accumulation triggers binding of KaiB to form the KaiB(6):KaiC(6) complex, leading to changes in output regulators CikA and SasA. KaiB switches to a thioredoxin-like fold (KaiB(fs)) when bound to KaiC. KaiB(6):KaiC(6) formation exposes a site for KaiA binding that sequesters KaiA from KaiC, making the KaiC(6):KaiB(6):KaiA(12) complex that results in KaiC autodephosphorylation. Its function is as follows. A metamorphic protein which reversibly switches between an inactive tetrameric fold and a rare, thioredoxin-like monomeric fold (KaiB(fs)). KaiB(fs) binds phospho-KaiC, KaiA and CikA. KaiA and CikA compete for binding to KaiB(fs), and KaiB(fs) and SasA compete for binding to KaiC, thus the clock oscillator and output signal pathway are tightly coupled. The sequence is that of Circadian clock oscillator protein KaiB from Nostoc punctiforme (strain ATCC 29133 / PCC 73102).